The following is a 351-amino-acid chain: Flagellar P-ring protein (351 aa).

An N-terminal signal peptide occupies residues 1-20 (MKKILFLFTASLLLHVTLQA).

Belongs to the FlgI family. In terms of assembly, the basal body constitutes a major portion of the flagellar organelle and consists of four rings (L,P,S, and M) mounted on a central rod.

The protein resides in the periplasm. It localises to the bacterial flagellum basal body. Its function is as follows. Assembles around the rod to form the L-ring and probably protects the motor/basal body from shearing forces during rotation. This is Flagellar P-ring protein from Sulfurimonas denitrificans (strain ATCC 33889 / DSM 1251) (Thiomicrospira denitrificans (strain ATCC 33889 / DSM 1251)).